The sequence spans 270 residues: Cbp/p300-interacting transactivator 2 (270 aa).

The disordered stretch occupies residues 138 to 201; it reads LHPAAGHQMN…SGGGSGSGNM (64 aa). The span at 165-198 shows a compositional bias: gly residues; that stretch reads STPGGSGGSSTPGGSGSSSGGGAGSSNSGGGSGS.

The protein belongs to the CITED family. As to quaternary structure, interacts (via C-terminus) with SMAD2. Interacts (via C-terminus) with SMAD3 (via MH2 domain). Interacts with LHX2 (via LIM domains). Interacts with WT1. Interacts (via C-terminus) with EP300 (via CH1 domain); the interaction is stimulated in response to hypoxia. Interacts with PPARA. Interacts (via C-terminus) with TFAP2A, TFAP2B and TFAP2C.

Its subcellular location is the nucleus. Transcriptional coactivator of the p300/CBP-mediated transcription complex. Acts as a bridge, linking TFAP2 transcription factors and the p300/CBP transcriptional coactivator complex in order to stimulate TFAP2-mediated transcriptional activation. Positively regulates TGF-beta signaling through its association with the SMAD/p300/CBP-mediated transcriptional coactivator complex. Stimulates the peroxisome proliferator-activated receptors PPARA transcriptional activity. Enhances estrogen-dependent transactivation mediated by estrogen receptors. Also acts as a transcriptional corepressor; interferes with the binding of the transcription factors HIF1A or STAT2 and the p300/CBP transcriptional coactivator complex. Participates in sex determination and early gonad development by stimulating transcription activation of SRY. Plays a role in controlling left-right patterning during embryogenesis; potentiates transcriptional activation of NODAL-mediated gene transcription in the left lateral plate mesoderm (LPM). Plays an essential role in differentiation of the adrenal cortex from the adrenogonadal primordium (AGP); stimulates WT1-mediated transcription activation thereby up-regulating the nuclear hormone receptor NR5A1 promoter activity. Associates with chromatin to the PITX2 P1 promoter region. The protein is Cbp/p300-interacting transactivator 2 (CITED2) of Homo sapiens (Human).